Here is a 450-residue protein sequence, read N- to C-terminus: Beclin-1 (450 aa).

Methionine 1 carries the post-translational modification N-acetylmethionine. Serine 15 and serine 30 each carry phosphoserine. The tract at residues 48-72 is disordered; that stretch reads TTAQAKPGETQEEETNSGEEPFIET. Phosphoserine; by AMPK occurs at positions 90, 93, and 96. A BH3 motif is present at residues 108–127; the sequence is TMENLSRRLKVTGDLFDIMS. An interaction with BCL2 and BCL2L1 isoform Bcl-X(L) region spans residues 112–159; that stretch reads LSRRLKVTGDLFDIMSGQTDVDHPLCEECTDTLLDQLDTQLNVTENEC. A Phosphothreonine; by DAPK1 modification is found at threonine 119. Positions 142–270 form a coiled coil; that stretch reads DTLLDQLDTQ…LDKLKKTNVF (129 aa). Residues 245–450 are evolutionary conserved domain (ECD); it reads DELKSVENQM…AWVSSQFYNK (206 aa). Glycyl lysine isopeptide (Lys-Gly) (interchain with G-Cter in ubiquitin) cross-links involve residues lysine 402 and lysine 437. The interval 425–450 is required for membrane-association; sequence WTKALKFMLTNLKWGLAWVSSQFYNK.

Belongs to the beclin family. A homodimeric form is proposed to exist; this metastable form readily transits to ATG14- or UVRAG-containing complexes with BECN1:UVRAG being more stable than BECN1:ATG14. Component of the PI3K (PI3KC3/PI3K-III/class III phosphatidylinositol 3-kinase) complex the core of which is composed of the catalytic subunit PIK3C3, the regulatory subunit PIK3R4 and BECN1 associating with additional regulatory/auxiliary subunits to form alternative complex forms. Alternative complex forms containing a fourth regulatory subunit in a mutually exclusive manner are PI3K complex I (PI3KC3-C1) containing ATG14, and PI3K complex II (PI3KC3-C2) containing UVRAG. PI3KC3-C1 displays a V-shaped architecture with PIK3R4 serving as a bridge between PIK3C3 and the ATG14:BECN1 subcomplex. Both, PI3KC3-C1 and PI3KC3-C2, can associate with further regulatory subunits, such as RUBCN, SH3GLB1/Bif-1 and AMBRA1. PI3KC3-C1 probably associates with PIK3CB. Forms a complex with PPP2CA and AMBRA1; AMBRA1 and BECN1 components of the complex regulate MYC stability via different pathways. Component of the complex, at least composed of LRPPRC, BECN1 and BCL2; the interactions prevent BECN1 from forming an autophagy-inducing complex with PIK3C3. Interacts with AMBRA1, GOPC, GRID2. Interacts with BCL2 and BCL2L1 isoform Bcl-X(L); the interaction inhibits BECN1 function in promoting autophagy by interfering with the formation of the PI3K complex. Interacts with cytosolic HMGB1; inhibits the interaction of BECN1 and BCL2 leading to promotion of autophagy. Interacts with USP10, USP13, VMP1, DAPK1, RAB39A. Interacts with the poly-Gln domain of ATXN3; the interaction causes deubiquitination at Lys-402 and stabilizes BECN1. Interacts with SLAMF1. Interacts with TRIM5; the interaction causes activation of BECN1 by causing its dissociation from its inhibitors BCL2 and TAB2. Interacts with active ULK1 (phosphorylated on 'Ser-317') and MEFV simultaneously. Interacts with WDR81 and WDR91; negatively regulates the PI3 kinase/PI3K activity associated with endosomal membranes. Interacts with LAPTM4B; competes with EGFR for LAPTM4B binding; regulates EGFR activity. Interacts with TRIM50. Interacts with TRIM16. Interacts with ATG14; this interaction is increased in the absence of TMEM39A. Interacts with WASHC1; preventing interaction with AMBRA1 and the DCX(AMBRA1) complex and subsequent ubiquitination. Interacts with TRIM17. Interacts with BCL2L10/BCL-B (via BH1 domain). Interacts with SH3BGRL. Interacts with IRGM; enhancing BECN1-interacting partners and influencing the composition of the BECN1 complex. Interacts with ARMC3. Interacts with LRPPRC. As to quaternary structure, (Microbial infection) Interacts with human cytomegalovirus/HHV-5 protein TRS1. In terms of assembly, (Microbial infection) Interacts with murine gammaherpesvirus 68 M11. (Microbial infection) Interacts with herpes simplex virus 1 (HHV-1) protein ICP34.5; this interaction antagonizes the host autophagy response. As to quaternary structure, (Microbial infection) Interacts with Epstein-Barr virus protein BHRF1; this interaction inhibits BECN1-mediated autophagy induction. In terms of processing, phosphorylation at Thr-119 by DAPK1 reduces its interaction with BCL2 and BCL2L1 and promotes induction of autophagy. In response to autophagic stimuli, phosphorylated at serine residues by AMPK in an ATG14-dependent manner, and this phosphorylation is critical for maximally efficient autophagy. Polyubiquitinated by NEDD4, both with 'Lys-11'- and 'Lys-63'-linkages. 'Lys-11'-linked polyubiquitination leads to degradation and is enhanced when the stabilizing interaction partner VPS34 is depleted. Deubiquitinated by USP10 and USP13, leading to stabilize the PIK3C3/VPS34-containing complexes. Polyubiquitinated at Lys-402 with 'Lys-48'-linkages. 'Lys-48'-linked polyubiquitination of Lys-402 leads to degradation. Deubiquitinated by ATXN3, leading to stabilization. Ubiquitinated at Lys-437 via 'Lys-63'-linkage by the DCX(AMBRA1) complex, thereby increasing the association between BECN1 and PIK3C3 to promote PIK3C3 activity. 'Lys-48'-linked ubiquitination by RNF216 leads to proteasomal degradation and autophagy inhibition. Post-translationally, proteolytically processed by caspases including CASP8 and CASP3; the C-terminal fragments lack autophagy-inducing capacity and are proposed to induce apoptosis. Thus the cleavage is proposed to be an determinant to switch from autophagy to apoptosis pathways affecting cellular homeostasis including viral infections and survival of tumor cells. In terms of tissue distribution, ubiquitous.

The protein localises to the cytoplasm. It is found in the golgi apparatus. Its subcellular location is the trans-Golgi network membrane. The protein resides in the endosome membrane. It localises to the endoplasmic reticulum membrane. The protein localises to the mitochondrion membrane. It is found in the endosome. Its subcellular location is the cytoplasmic vesicle. The protein resides in the autophagosome. It localises to the mitochondrion. The protein localises to the nucleus. In terms of biological role, plays a central role in autophagy. Acts as a core subunit of the PI3K complex that mediates formation of phosphatidylinositol 3-phosphate; different complex forms are believed to play a role in multiple membrane trafficking pathways: PI3KC3-C1 is involved in initiation of autophagosomes and PI3KC3-C2 in maturation of autophagosomes and endocytosis. Involved in regulation of degradative endocytic trafficking and required for the abscission step in cytokinesis, probably in the context of PI3KC3-C2. Essential for the formation of PI3KC3-C2 but not PI3KC3-C1 PI3K complex forms. Involved in endocytosis. May play a role in antiviral host defense. Its function is as follows. Beclin-1-C 35 kDa localized to mitochondria can promote apoptosis; it induces the mitochondrial translocation of BAX and the release of proapoptotic factors. Functionally, (Microbial infection) Protects against infection by a neurovirulent strain of Sindbis virus. The sequence is that of Beclin-1 (BECN1) from Homo sapiens (Human).